The primary structure comprises 450 residues: D-inositol 3-phosphate glycosyltransferase (450 aa).

Residue His26 coordinates 1D-myo-inositol 3-phosphate. UDP-N-acetyl-alpha-D-glucosamine is bound by residues 32-33 (QP) and Gly40. 1D-myo-inositol 3-phosphate is bound by residues 37–42 (DAGGMN), Lys95, Tyr128, Thr152, and Arg172. 3 residues coordinate UDP-N-acetyl-alpha-D-glucosamine: Arg246, Lys251, and Gln313. 3 residues coordinate Mg(2+): Tyr322, Arg323, and Ala325. The UDP-N-acetyl-alpha-D-glucosamine site is built by Glu335 and Glu343. Thr349 lines the Mg(2+) pocket.

Belongs to the glycosyltransferase group 1 family. MshA subfamily. In terms of assembly, homodimer.

It carries out the reaction 1D-myo-inositol 3-phosphate + UDP-N-acetyl-alpha-D-glucosamine = 1D-myo-inositol 2-acetamido-2-deoxy-alpha-D-glucopyranoside 3-phosphate + UDP + H(+). Functionally, catalyzes the transfer of a N-acetyl-glucosamine moiety to 1D-myo-inositol 3-phosphate to produce 1D-myo-inositol 2-acetamido-2-deoxy-glucopyranoside 3-phosphate in the mycothiol biosynthesis pathway. This is D-inositol 3-phosphate glycosyltransferase from Mycolicibacterium vanbaalenii (strain DSM 7251 / JCM 13017 / BCRC 16820 / KCTC 9966 / NRRL B-24157 / PYR-1) (Mycobacterium vanbaalenii).